Reading from the N-terminus, the 782-residue chain is Formin-like protein 9 (782 aa).

The first 24 residues, 1–24, serve as a signal peptide directing secretion; sequence MQNFWFAIFFFLLTCAPPSPLSYA. A helical membrane pass occupies residues 102-122; sequence LLLPALSAVLVIATVIGLALF. 3 disordered regions span residues 191–223, 264–287, and 387–407; these read DSPEIRPLPPLPPRSFHHNNYETEVNEEDEEEE, MSPPNPRYSDATNLQSPSPERLRV, and SSSQQSKVPALPPPTRPPPLV. Over residues 214 to 223 the composition is skewed to acidic residues; it reads EVNEEDEEEE. Positions 396–407 are enriched in pro residues; that stretch reads ALPPPTRPPPLV. Residues 406 to 782 form the FH2 domain; the sequence is LVPPSQPFVV…LDQVCKEMGD (377 aa).

Belongs to the formin-like family. Class-I subfamily.

It is found in the membrane. In terms of biological role, might be involved in the organization and polarity of the actin cytoskeleton. The polypeptide is Formin-like protein 9 (FH9) (Arabidopsis thaliana (Mouse-ear cress)).